A 478-amino-acid chain; its full sequence is Membrane-bound lytic murein transglycosylase F (478 aa).

The signal sequence occupies residues 1 to 29 (MFPDSSYLFSMRSLSRFLIAIFGCGALLA). Residues 30–269 (SCDSFERSVL…RLLDRYYGHI (240 aa)) are non-LT domain. The tract at residues 271–478 (RLHHTDVNGI…RKEDDSWQEF (208 aa)) is LT domain. The active site involves Glu316.

This sequence in the N-terminal section; belongs to the bacterial solute-binding protein 3 family. It in the C-terminal section; belongs to the transglycosylase Slt family.

It is found in the cell outer membrane. The catalysed reaction is Exolytic cleavage of the (1-&gt;4)-beta-glycosidic linkage between N-acetylmuramic acid (MurNAc) and N-acetylglucosamine (GlcNAc) residues in peptidoglycan, from either the reducing or the non-reducing ends of the peptidoglycan chains, with concomitant formation of a 1,6-anhydrobond in the MurNAc residue.. Its function is as follows. Murein-degrading enzyme that degrades murein glycan strands and insoluble, high-molecular weight murein sacculi, with the concomitant formation of a 1,6-anhydromuramoyl product. Lytic transglycosylases (LTs) play an integral role in the metabolism of the peptidoglycan (PG) sacculus. Their lytic action creates space within the PG sacculus to allow for its expansion as well as for the insertion of various structures such as secretion systems and flagella. In Nitrosospira multiformis (strain ATCC 25196 / NCIMB 11849 / C 71), this protein is Membrane-bound lytic murein transglycosylase F.